We begin with the raw amino-acid sequence, 506 residues long: Maturase K (506 aa).

Belongs to the intron maturase 2 family. MatK subfamily.

Its subcellular location is the plastid. The protein localises to the chloroplast. Its function is as follows. Usually encoded in the trnK tRNA gene intron. Probably assists in splicing its own and other chloroplast group II introns. This is Maturase K from Lathyrus sativus (White vetchling).